The sequence spans 421 residues: Gamma-glutamyl phosphate reductase (421 aa).

Belongs to the gamma-glutamyl phosphate reductase family.

Its subcellular location is the cytoplasm. It carries out the reaction L-glutamate 5-semialdehyde + phosphate + NADP(+) = L-glutamyl 5-phosphate + NADPH + H(+). It participates in amino-acid biosynthesis; L-proline biosynthesis; L-glutamate 5-semialdehyde from L-glutamate: step 2/2. In terms of biological role, catalyzes the NADPH-dependent reduction of L-glutamate 5-phosphate into L-glutamate 5-semialdehyde and phosphate. The product spontaneously undergoes cyclization to form 1-pyrroline-5-carboxylate. The polypeptide is Gamma-glutamyl phosphate reductase (Pseudomonas fluorescens (strain ATCC BAA-477 / NRRL B-23932 / Pf-5)).